The sequence spans 232 residues: MNYISFPTAQHAVDKIAQEFVIYSQLNHPVHISLSGGSTPKLLFKTLAKSPYAEQINWKNLHFWWGDDRMVPPSDPESNYGEVQKLLFDHIQIPAENIHRIRGENEPHFELKRFEEELSAVIPNGVFDWIILGMGIDGHTASLFPHQTNFDDENLAVIAKHPESGQIRISKTAKLIEQAKRITYLVTGESKADILKEIQTTPAENLPYPAAKIKAKNGVTEWYLDKAAVRLL.

It belongs to the glucosamine/galactosamine-6-phosphate isomerase family. 6-phosphogluconolactonase subfamily.

The catalysed reaction is 6-phospho-D-glucono-1,5-lactone + H2O = 6-phospho-D-gluconate + H(+). It functions in the pathway carbohydrate degradation; pentose phosphate pathway; D-ribulose 5-phosphate from D-glucose 6-phosphate (oxidative stage): step 2/3. Functionally, hydrolysis of 6-phosphogluconolactone to 6-phosphogluconate. The sequence is that of 6-phosphogluconolactonase (pgl) from Haemophilus influenzae (strain ATCC 51907 / DSM 11121 / KW20 / Rd).